The sequence spans 476 residues: Proline--tRNA ligase (476 aa).

The protein belongs to the class-II aminoacyl-tRNA synthetase family. ProS type 3 subfamily. In terms of assembly, homodimer.

Its subcellular location is the cytoplasm. The catalysed reaction is tRNA(Pro) + L-proline + ATP = L-prolyl-tRNA(Pro) + AMP + diphosphate. Functionally, catalyzes the attachment of proline to tRNA(Pro) in a two-step reaction: proline is first activated by ATP to form Pro-AMP and then transferred to the acceptor end of tRNA(Pro). The chain is Proline--tRNA ligase from Mycoplasma mobile (strain ATCC 43663 / 163K / NCTC 11711) (Mesomycoplasma mobile).